Consider the following 110-residue polypeptide: B3 domain-containing protein LOC_Os02g10420 (110 aa).

Positions 1 to 104 form a DNA-binding region, TF-B3; that stretch reads MSAMLNENVP…VLSVTVHKAD (104 aa).

It is found in the nucleus. This is B3 domain-containing protein LOC_Os02g10420 from Oryza sativa subsp. japonica (Rice).